The chain runs to 123 residues: Histone H2B (123 aa).

Residues 1-32 are disordered; that stretch reads MPPKAASKGAKKAASKAKAARSTDKKKRRRRR. Basic residues predominate over residues 9–32; the sequence is GAKKAASKAKAARSTDKKKRRRRR. An O-linked (GlcNAc) serine glycan is attached at Ser-110. A Glycyl lysine isopeptide (Lys-Gly) (interchain with G-Cter in ubiquitin) cross-link involves residue Lys-118.

This sequence belongs to the histone H2B family. In terms of assembly, the nucleosome is a histone octamer containing two molecules each of H2A, H2B, H3 and H4 assembled in one H3-H4 heterotetramer and two H2A-H2B heterodimers. The octamer wraps approximately 147 bp of DNA. Post-translationally, monoubiquitination of Lys-118 gives a specific tag for epigenetic transcriptional activation and is also prerequisite for histone H3 'Lys-4' and 'Lys-79' methylation.

The protein resides in the nucleus. The protein localises to the chromosome. In terms of biological role, core component of nucleosome. Nucleosomes wrap and compact DNA into chromatin, limiting DNA accessibility to the cellular machineries which require DNA as a template. Histones thereby play a central role in transcription regulation, DNA repair, DNA replication and chromosomal stability. DNA accessibility is regulated via a complex set of post-translational modifications of histones, also called histone code, and nucleosome remodeling. This chain is Histone H2B, found in Urechis caupo (Innkeeper worm).